Consider the following 57-residue polypeptide: Large ribosomal subunit protein bL32 (57 aa).

Residues 1–23 are disordered; the sequence is MAVPARHTSSAKKNRRRTHYKLT. Over residues 9-20 the composition is skewed to basic residues; sequence SSAKKNRRRTHY.

This sequence belongs to the bacterial ribosomal protein bL32 family.

The protein is Large ribosomal subunit protein bL32 of Lactococcus lactis subsp. cremoris (strain MG1363).